A 514-amino-acid polypeptide reads, in one-letter code: Serine/threonine-protein kinase 33 (514 aa).

A compositionally biased stretch (basic and acidic residues) spans 65 to 86; that stretch reads INRDITSRKDLPSRTSNVERKA. Positions 65-91 are disordered; the sequence is INRDITSRKDLPSRTSNVERKASQQQW. One can recognise a Protein kinase domain in the interval 116-381; that stretch reads YTFGRILGKG…AKELLDNQWL (266 aa). ATP is bound by residues 122–130 and Lys-145; that span reads LGKGSFGIV. Asp-238 acts as the Proton acceptor in catalysis. Disordered regions lie at residues 402 to 468 and 485 to 514; these read KNNP…DMCS and MEKT…KKKL. Ser-407 bears the Phosphoserine mark. Positions 413 to 426 are enriched in basic and acidic residues; that stretch reads TEEKNKPSTEEKLK. Residues 449-468 show a composition bias toward polar residues; sequence STAYEKQFPATSKDNFDMCS.

This sequence belongs to the protein kinase superfamily. CAMK Ser/Thr protein kinase family. CaMK subfamily. In terms of assembly, homodimer. Autophosphorylated. As to expression, highly expressed in testis, fetal lung and heart, followed by pituitary gland, kidney, interventricular septum, pancreas, heart, trachea, thyroid gland and uterus. Weak hybridization signals were observed in the following tissues: amygdala, aorta, esophagus, colon ascending, colon transverse, skeletal muscle, spleen, peripheral blood leukocyte, lymph node, bone marrow, placenta, prostate, liver, salivary gland, mammary gland, some tumor cell lines, fetal brain, fetal liver, fetal spleen and fetal thymus. No signal at all was detectable in RNA from tissues of the nervous system.

Its subcellular location is the cytoplasm. It localises to the cytoskeleton. The protein localises to the perinuclear region. The catalysed reaction is L-seryl-[protein] + ATP = O-phospho-L-seryl-[protein] + ADP + H(+). It catalyses the reaction L-threonyl-[protein] + ATP = O-phospho-L-threonyl-[protein] + ADP + H(+). With respect to regulation, specifically inhibited by CDD-2807 ((3-([1,1'-Biphenyl]-2-ylethynyl)-1H-indazol-5-yl)(2,6-diazaspiro[3.5]nonan-2-yl)methanone). Serine/threonine protein kinase required for spermatid differentiation and male fertility. Promotes sperm flagella assembly during spermatogenesis by mediating phosphorylation of fibrous sheath proteins AKAP3 and AKAP4. Also phosphorylates vimentin/VIM, thereby regulating the dynamic behavior of the intermediate filament cytoskeleton. The sequence is that of Serine/threonine-protein kinase 33 from Homo sapiens (Human).